The primary structure comprises 351 residues: Protein-glutamate methylesterase/protein-glutamine glutaminase 1 (351 aa).

One can recognise a Response regulatory domain in the interval 1-115 (MVDDSAVVRQ…KQFLTESADE (115 aa)). 4-aspartylphosphate is present on D49. The region spanning 161–351 (AQTTERIVAI…MAREIVTQLQ (191 aa)) is the CheB-type methylesterase domain. Residues S173, H199, and D295 contribute to the active site.

The protein belongs to the CheB family. Post-translationally, phosphorylated by CheA. Phosphorylation of the N-terminal regulatory domain activates the methylesterase activity.

The protein resides in the cytoplasm. It carries out the reaction [protein]-L-glutamate 5-O-methyl ester + H2O = L-glutamyl-[protein] + methanol + H(+). It catalyses the reaction L-glutaminyl-[protein] + H2O = L-glutamyl-[protein] + NH4(+). Functionally, involved in chemotaxis. Part of a chemotaxis signal transduction system that modulates chemotaxis in response to various stimuli. Catalyzes the demethylation of specific methylglutamate residues introduced into the chemoreceptors (methyl-accepting chemotaxis proteins or MCP) by CheR. Also mediates the irreversible deamidation of specific glutamine residues to glutamic acid. This Xanthomonas oryzae pv. oryzae (strain MAFF 311018) protein is Protein-glutamate methylesterase/protein-glutamine glutaminase 1.